We begin with the raw amino-acid sequence, 367 residues long: Glutamate 5-kinase (367 aa).

Lysine 10 provides a ligand contact to ATP. Substrate contacts are provided by serine 50, aspartate 137, and asparagine 149. Residues 169 to 170 and 211 to 217 contribute to the ATP site; these read TD and TGGMATK. A PUA domain is found at 275–353; that stretch reads AGVIIVDNGA…QEISQILGYE (79 aa).

This sequence belongs to the glutamate 5-kinase family.

Its subcellular location is the cytoplasm. The catalysed reaction is L-glutamate + ATP = L-glutamyl 5-phosphate + ADP. It functions in the pathway amino-acid biosynthesis; L-proline biosynthesis; L-glutamate 5-semialdehyde from L-glutamate: step 1/2. Functionally, catalyzes the transfer of a phosphate group to glutamate to form L-glutamate 5-phosphate. This Proteus mirabilis (strain HI4320) protein is Glutamate 5-kinase.